The primary structure comprises 469 residues: uncharacterized protein (469 aa).

Residues 203 to 244 (ACPVPPQGHASSAADQAGVPERGRKRAHEGPGAGEAASAGRG) form a disordered region.

The protein belongs to the epstein-barr virus LF1 family.

This is an uncharacterized protein from Epstein-Barr virus (strain AG876) (HHV-4).